The chain runs to 117 residues: Large ribosomal subunit protein uL18 (117 aa).

The protein belongs to the universal ribosomal protein uL18 family. Part of the 50S ribosomal subunit; part of the 5S rRNA/L5/L18/L25 subcomplex. Contacts the 5S and 23S rRNAs.

Functionally, this is one of the proteins that bind and probably mediate the attachment of the 5S RNA into the large ribosomal subunit, where it forms part of the central protuberance. The polypeptide is Large ribosomal subunit protein uL18 (Aeromonas salmonicida (strain A449)).